Consider the following 382-residue polypeptide: MSLKEKTQSLFANAFGYPATHTIQAPGRVNLIGEHTDYNDGFVLPCAIDYQTVISCAPRDDRKVRVMAADYENQLDEFSLNAPIVAHENYQWANYVRGVVKHLQLRNNSFGGVDMVISGNVPQGAGLSSSASLEVAVGTVLQQLYHLPLDGAQIALNGQEAENQFVGCNCGIMDQLISALGKKDHALLIDCRSLGTKAVSMPKGVAVVIINSNFKRTLVGSEYNTRREQCETGARFFQQPALRDVTIEEFNAVAHELDPIVAKRVRHILTENARTVEAASALEQGDLKRMGELMAESHASMRDDFEITVPQIDTLAEIVKAVIGDKGGVRMTGGGFGGCIVALIPEELVPAVQQAVAEQYEAKTGIKETFYVCKPSQGAGQC.

34 to 37 (EHTD) serves as a coordination point for substrate. 124 to 130 (GAGLSSS) serves as a coordination point for ATP. Mg(2+) contacts are provided by S130 and E162. Catalysis depends on D174, which acts as the Proton acceptor. Residue Y223 participates in substrate binding.

Belongs to the GHMP kinase family. GalK subfamily.

The protein localises to the cytoplasm. The enzyme catalyses alpha-D-galactose + ATP = alpha-D-galactose 1-phosphate + ADP + H(+). It functions in the pathway carbohydrate metabolism; galactose metabolism. Functionally, catalyzes the transfer of the gamma-phosphate of ATP to D-galactose to form alpha-D-galactose-1-phosphate (Gal-1-P). The protein is Galactokinase of Shigella boydii serotype 4 (strain Sb227).